Consider the following 132-residue polypeptide: Prefoldin subunit alpha (132 aa).

Belongs to the prefoldin subunit alpha family. In terms of assembly, heterohexamer of two alpha and four beta subunits.

It is found in the cytoplasm. Molecular chaperone capable of stabilizing a range of proteins. Seems to fulfill an ATP-independent, HSP70-like function in archaeal de novo protein folding. In Pyrobaculum aerophilum (strain ATCC 51768 / DSM 7523 / JCM 9630 / CIP 104966 / NBRC 100827 / IM2), this protein is Prefoldin subunit alpha (pfdA).